Here is an 854-residue protein sequence, read N- to C-terminus: DNA mismatch repair protein MutS (854 aa).

616–623 serves as a coordination point for ATP; the sequence is GPNMGGKS.

It belongs to the DNA mismatch repair MutS family.

Its function is as follows. This protein is involved in the repair of mismatches in DNA. It is possible that it carries out the mismatch recognition step. This protein has a weak ATPase activity. The chain is DNA mismatch repair protein MutS from Pectobacterium atrosepticum (strain SCRI 1043 / ATCC BAA-672) (Erwinia carotovora subsp. atroseptica).